A 258-amino-acid polypeptide reads, in one-letter code: Venom plasminogen activator TSV-PA (258 aa).

An N-terminal signal peptide occupies residues 1–18; that stretch reads MELIRVLANLLILQLSYA. The propeptide occupies 19–24; that stretch reads QKSSEL. The Peptidase S1 domain occupies 25 to 249; it reads VFGGDECNIN…YLDWIKSIIA (225 aa). Intrachain disulfides connect Cys31/Cys163, Cys50/Cys66, Cys98/Cys256, Cys142/Cys210, Cys174/Cys189, and Cys200/Cys225. Active-site charge relay system residues include His65 and Asp110. The N-linked (GlcNAc...) asparagine glycan is linked to Asn185. Ser204 (charge relay system) is an active-site residue.

The protein belongs to the peptidase S1 family. Snake venom subfamily. As to quaternary structure, monomer. As to expression, expressed by the venom gland.

The protein resides in the secreted. Functionally, snake venom serine protease that activates plasminogen. The polypeptide is Venom plasminogen activator TSV-PA (Trimeresurus stejnegeri (Chinese green tree viper)).